A 240-amino-acid polypeptide reads, in one-letter code: UDP-2,3-diacylglucosamine hydrolase (240 aa).

Positions 7, 9, 40, 78, and 113 each coordinate Mn(2+). 78–79 provides a ligand contact to substrate; it reads NR. Asp121, Ser159, Lys166, and His194 together coordinate substrate. 2 residues coordinate Mn(2+): His194 and His196.

This sequence belongs to the LpxH family. Mn(2+) serves as cofactor.

Its subcellular location is the cell inner membrane. The enzyme catalyses UDP-2-N,3-O-bis[(3R)-3-hydroxytetradecanoyl]-alpha-D-glucosamine + H2O = 2-N,3-O-bis[(3R)-3-hydroxytetradecanoyl]-alpha-D-glucosaminyl 1-phosphate + UMP + 2 H(+). It participates in glycolipid biosynthesis; lipid IV(A) biosynthesis; lipid IV(A) from (3R)-3-hydroxytetradecanoyl-[acyl-carrier-protein] and UDP-N-acetyl-alpha-D-glucosamine: step 4/6. Its function is as follows. Hydrolyzes the pyrophosphate bond of UDP-2,3-diacylglucosamine to yield 2,3-diacylglucosamine 1-phosphate (lipid X) and UMP by catalyzing the attack of water at the alpha-P atom. Involved in the biosynthesis of lipid A, a phosphorylated glycolipid that anchors the lipopolysaccharide to the outer membrane of the cell. The chain is UDP-2,3-diacylglucosamine hydrolase from Pseudomonas putida (strain ATCC 47054 / DSM 6125 / CFBP 8728 / NCIMB 11950 / KT2440).